Consider the following 309-residue polypeptide: MMLPRLLLLVVASALPLASVAAGAVGVGEGFCSAEPSAASGGCSGVRPPLYWKATNPTLAPAHLQDLPGFTRSVYKRDHALITPESHVFSPLPDWINTLGAYLISPAIGAHFTMYLAKMHDGSKSALPPKGVERLIFVLQGSILLSEESGNTHTLLVDSYAYLPANMKHSVISDEVTTLVIFERRYTTIEGYHPDLIVGSTDKQPLLETPGEVFELRKLLPTSLPYDFNIHIMDFQPGEYLNVKEVHYNQHGLLLLEGQGIYRLGDSWYPVQSGDTIWMAPFVPQWYAALGKTKTRYLLYKDVNRDPLI.

Positions 1–22 (MMLPRLLLLVVASALPLASVAA) are cleaved as a signal peptide. Mn(2+) contacts are provided by Glu-245, His-247, His-251, and Gln-285. Residue Glu-245 coordinates substrate. The substrate site is built by Gln-285, Tyr-297, and Lys-301.

The protein belongs to the UGHY family. In terms of assembly, homooctamer. Mn(2+) serves as cofactor.

Its subcellular location is the endoplasmic reticulum. It catalyses the reaction (S)-2-ureidoglycine + H2O = (S)-ureidoglycolate + NH4(+). Its function is as follows. Involved in the catabolism of purine nucleotides. The sequential activity of AAH, UGLYAH and UAH allows a complete purine breakdown without the intermediate generation of urea. The polypeptide is Probable (S)-ureidoglycine aminohydrolase (UGLYAH) (Oryza sativa subsp. japonica (Rice)).